Here is a 1026-residue protein sequence, read N- to C-terminus: HEAT repeat-containing protein 4 (1026 aa).

The disordered stretch occupies residues 135 to 175; sequence AVKTESSANPEKKLKKSKPASTVREAPRPLIHHPCMHPDML. HEAT repeat units lie at residues 530–568, 724–760, and 761–794; these read LLPA…NIMQ, KLMT…QIRD, and KMVL…GQVS.

The polypeptide is HEAT repeat-containing protein 4 (HEATR4) (Homo sapiens (Human)).